The chain runs to 169 residues: S-ribosylhomocysteine lyase (169 aa).

Fe cation contacts are provided by His-54, His-58, and Cys-128.

This sequence belongs to the LuxS family. As to quaternary structure, homodimer. Fe cation serves as cofactor.

The enzyme catalyses S-(5-deoxy-D-ribos-5-yl)-L-homocysteine = (S)-4,5-dihydroxypentane-2,3-dione + L-homocysteine. Functionally, involved in the synthesis of autoinducer 2 (AI-2) which is secreted by bacteria and is used to communicate both the cell density and the metabolic potential of the environment. The regulation of gene expression in response to changes in cell density is called quorum sensing. Catalyzes the transformation of S-ribosylhomocysteine (RHC) to homocysteine (HC) and 4,5-dihydroxy-2,3-pentadione (DPD). This Shewanella oneidensis (strain ATCC 700550 / JCM 31522 / CIP 106686 / LMG 19005 / NCIMB 14063 / MR-1) protein is S-ribosylhomocysteine lyase.